A 367-amino-acid polypeptide reads, in one-letter code: tRNA(Ile)-lysidine synthase (367 aa).

32 to 37 (SGGSDS) provides a ligand contact to ATP.

It belongs to the tRNA(Ile)-lysidine synthase family.

The protein resides in the cytoplasm. The enzyme catalyses cytidine(34) in tRNA(Ile2) + L-lysine + ATP = lysidine(34) in tRNA(Ile2) + AMP + diphosphate + H(+). Ligates lysine onto the cytidine present at position 34 of the AUA codon-specific tRNA(Ile) that contains the anticodon CAU, in an ATP-dependent manner. Cytidine is converted to lysidine, thus changing the amino acid specificity of the tRNA from methionine to isoleucine. The polypeptide is tRNA(Ile)-lysidine synthase (Hyphomonas neptunium (strain ATCC 15444)).